The following is a 398-amino-acid chain: Proteasome-activating nucleotidase (398 aa).

The stretch at Ile-18–Pro-59 forms a coiled coil. Residues Gly-183–Leu-188 and His-322 contribute to the ATP site. The segment at Met-396 to Gly-398 is docks into pockets in the proteasome alpha-ring to cause gate opening.

Belongs to the AAA ATPase family. As to quaternary structure, homohexamer. The hexameric complex has a two-ring architecture resembling a top hat that caps the 20S proteasome core at one or both ends. Upon ATP-binding, the C-terminus of PAN interacts with the alpha-rings of the proteasome core by binding to the intersubunit pockets.

It localises to the cytoplasm. In terms of biological role, ATPase which is responsible for recognizing, binding, unfolding and translocation of substrate proteins into the archaeal 20S proteasome core particle. Is essential for opening the gate of the 20S proteasome via an interaction with its C-terminus, thereby allowing substrate entry and access to the site of proteolysis. Thus, the C-termini of the proteasomal ATPase function like a 'key in a lock' to induce gate opening and therefore regulate proteolysis. Unfolding activity requires energy from ATP hydrolysis, whereas ATP binding alone promotes ATPase-20S proteasome association which triggers gate opening, and supports translocation of unfolded substrates. The protein is Proteasome-activating nucleotidase of Thermococcus onnurineus (strain NA1).